The sequence spans 207 residues: Large ribosomal subunit protein bL25 (207 aa).

The protein belongs to the bacterial ribosomal protein bL25 family. CTC subfamily. Part of the 50S ribosomal subunit; part of the 5S rRNA/L5/L18/L25 subcomplex. Contacts the 5S rRNA. Binds to the 5S rRNA independently of L5 and L18.

This is one of the proteins that binds to the 5S RNA in the ribosome where it forms part of the central protuberance. This is Large ribosomal subunit protein bL25 from Azorhizobium caulinodans (strain ATCC 43989 / DSM 5975 / JCM 20966 / LMG 6465 / NBRC 14845 / NCIMB 13405 / ORS 571).